Reading from the N-terminus, the 845-residue chain is Protein P (845 aa).

Residues 1–179 (MPLSYQHFRK…FCGSPYSWEQ (179 aa)) form a terminal protein domain (TP) region. The segment at 180–348 (ELQHGRLVIK…YCLSHLVNLR (169 aa)) is spacer. The segment at 226–252 (GLQPRQGRLASSQPSRSGSIRAKAHPS) is disordered. The segment covering 234-243 (LASSQPSRSG) has biased composition (polar residues). Residues 349–692 (EDWGPCDEHG…YMNLYPVARQ (344 aa)) are polymerase/reverse transcriptase domain (RT). The Reverse transcriptase domain occupies 359-602 (EHHIRIPRTP…YSLNFMGYII (244 aa)). Aspartate 431, aspartate 553, and aspartate 554 together coordinate Mg(2+). The rnaseH domain (RH) stretch occupies residues 693-845 (RPGLCQVFAD…SPLHVAWRPP (153 aa)).

Belongs to the hepadnaviridae P protein family.

It carries out the reaction DNA(n) + a 2'-deoxyribonucleoside 5'-triphosphate = DNA(n+1) + diphosphate. It catalyses the reaction Endonucleolytic cleavage to 5'-phosphomonoester.. Activated by host HSP70 and HSP40 in vitro to be able to bind the epsilon loop of the pgRNA. Because deletion of the RNase H region renders the protein partly chaperone-independent, the chaperones may be needed indirectly to relieve occlusion of the RNA-binding site by this domain. Inhibited by several reverse-transcriptase inhibitors: Lamivudine, Adefovir and Entecavir. Its function is as follows. Multifunctional enzyme that converts the viral RNA genome into dsDNA in viral cytoplasmic capsids. This enzyme displays a DNA polymerase activity that can copy either DNA or RNA templates, and a ribonuclease H (RNase H) activity that cleaves the RNA strand of RNA-DNA heteroduplexes in a partially processive 3'- to 5'-endonucleasic mode. Neo-synthesized pregenomic RNA (pgRNA) are encapsidated together with the P protein, and reverse-transcribed inside the nucleocapsid. Initiation of reverse-transcription occurs first by binding the epsilon loop on the pgRNA genome, and is initiated by protein priming, thereby the 5'-end of (-)DNA is covalently linked to P protein. Partial (+)DNA is synthesized from the (-)DNA template and generates the relaxed circular DNA (RC-DNA) genome. After budding and infection, the RC-DNA migrates in the nucleus, and is converted into a plasmid-like covalently closed circular DNA (cccDNA). The activity of P protein does not seem to be necessary for cccDNA generation, and is presumably released from (+)DNA by host nuclear DNA repair machinery. This is Protein P from Homo sapiens (Human).